Consider the following 565-residue polypeptide: Membrane protein insertase YidC (565 aa).

A run of 6 helical transmembrane segments spans residues 6 to 26, 348 to 368, 370 to 390, 437 to 457, 479 to 499, and 516 to 536; these read VLLIFSWLTVATLLWMDWGKN, LMALIGQGLFWILSHLNSLLH, WGWAIVGLVVLLRIAMYPLSA, GGCFPILIQMPIFFALYWVLV, PYFILPLLNIVIMWATQKLTP, and PLIFGVMMAFVPSGLALYWVI.

The protein belongs to the OXA1/ALB3/YidC family. Type 1 subfamily. Interacts with the Sec translocase complex via SecD. Specifically interacts with transmembrane segments of nascent integral membrane proteins during membrane integration.

The protein localises to the cell inner membrane. Functionally, required for the insertion and/or proper folding and/or complex formation of integral membrane proteins into the membrane. Involved in integration of membrane proteins that insert both dependently and independently of the Sec translocase complex, as well as at least some lipoproteins. Aids folding of multispanning membrane proteins. The sequence is that of Membrane protein insertase YidC from Xylella fastidiosa (strain 9a5c).